The primary structure comprises 339 residues: Heat-inducible transcription repressor HrcA (339 aa).

The protein belongs to the HrcA family.

Its function is as follows. Negative regulator of class I heat shock genes (grpE-dnaK-dnaJ and groELS operons). Prevents heat-shock induction of these operons. In Clostridium perfringens (strain ATCC 13124 / DSM 756 / JCM 1290 / NCIMB 6125 / NCTC 8237 / Type A), this protein is Heat-inducible transcription repressor HrcA.